A 243-amino-acid polypeptide reads, in one-letter code: ABC transporter arginine-binding protein 1 (243 aa).

Positions 1 to 19 (MKKLVLAALLASFTFGASA) are cleaved as a signal peptide.

This sequence belongs to the bacterial solute-binding protein 3 family. As to quaternary structure, the complex is composed of two ATP-binding proteins (ArtP), two transmembrane proteins (ArtM and ArtQ) and two solute-binding proteins (ArtJ and ArtI).

It is found in the periplasm. In terms of biological role, part of the ABC transporter complex ArtPIQMJ involved in arginine transport. Binds L-arginine with high affinity. The chain is ABC transporter arginine-binding protein 1 (artJ) from Escherichia coli (strain K12).